The following is a 157-amino-acid chain: Glycine-rich RNA-binding protein (157 aa).

An RRM domain is found at 6–84 (YRCFVGGLAW…RNITVNEAQS (79 aa)). The interval 70–157 (QELDGRNITV…YGGGGGGSRW (88 aa)) is disordered. 2 stretches are compositionally biased toward gly residues: residues 86 to 138 (GSGG…GGYG) and 145 to 157 (DGGY…GSRW).

Functionally, may play a role in the biosynthesis and processing of heterogeneous nuclear RNA and in the maturation of specific mRNAs in response to wounding. The chain is Glycine-rich RNA-binding protein from Daucus carota (Wild carrot).